Here is a 250-residue protein sequence, read N- to C-terminus: Histone H1.1 (250 aa).

The span at 1 to 11 (MSDSAVATSAS) shows a compositional bias: polar residues. Disordered stretches follow at residues 1–52 (MSDS…QQMV) and 104–250 (QTKG…ATKK). The H15 domain occupies 44–118 (SHPPTQQMVD…GASGSFKLSA (75 aa)). Basic and acidic residues predominate over residues 122–133 (KDAKPKASAVEK). Residues 140 to 161 (ASAARATKSKSSTSTTKKAAGA) are compositionally biased toward low complexity. The segment covering 174 to 191 (KNVEKKKADKEKAKDAKK) has biased composition (basic and acidic residues). A compositionally biased stretch (low complexity) spans 192 to 234 (TGTIKAKPTTAKAKSSATKPKTPKPKTTSAKPKKVVSATTPKK). The span at 235 to 250 (TAVKKPKAKTASATKK) shows a compositional bias: basic residues.

The protein belongs to the histone H1/H5 family.

The protein resides in the nucleus. It localises to the chromosome. Its function is as follows. Histones H1 are necessary for the condensation of nucleosome chains into higher-order structures. In Drosophila virilis (Fruit fly), this protein is Histone H1.1 (His1.1).